The primary structure comprises 408 residues: Serine-rich antigen (408 aa).

2 tandem repeats follow at residues 209–214 (SVAQSE) and 230–235 (SVAQSE). The interval 209 to 235 (SVAQSEEHGSDSMSQSYNTCGSVAQSE) is 2 X 6 AA repeats of S-V-A-Q-S-E.

It belongs to the mycobacterial PPE family.

The polypeptide is Serine-rich antigen (sra) (Mycobacterium leprae (strain TN)).